Reading from the N-terminus, the 313-residue chain is 2-phosphoglycerate kinase (313 aa).

The 88-residue stretch at 8-95 folds into the ATP-cone domain; it reads NKILVKDKDY…LWRRVLKKHS (88 aa).

Belongs to the 2-phosphoglycerate kinase family. The cofactor is a divalent metal cation.

The enzyme catalyses (2R)-2-phosphoglycerate + ATP = (2R)-2,3-bisphosphoglycerate + ADP + H(+). The protein operates within thermoadapter biosynthesis; cyclic 2,3-diphosphoglycerate biosynthesis; cyclic 2,3-diphosphoglycerate from 2-phospho-D-glycerate: step 1/2. In terms of biological role, catalyzes the phosphorylation of 2-phosphoglycerate to 2,3-diphosphoglycerate. Involved in the biosynthesis of cyclic 2,3-bisphosphoglycerate, a thermoprotectant. The protein is 2-phosphoglycerate kinase of Methanococcus vannielii (strain ATCC 35089 / DSM 1224 / JCM 13029 / OCM 148 / SB).